A 211-amino-acid chain; its full sequence is uncharacterized protein (211 aa).

The signal sequence occupies residues Met-1–Thr-20.

To M.leprae ML0378.

This is an uncharacterized protein from Mycobacterium tuberculosis (strain CDC 1551 / Oshkosh).